Reading from the N-terminus, the 334-residue chain is MTKPIVFSGAQPSGELTIGNYMGALRQWVNMQDDYHCIYCIVDQHAITVRQDAQKLRKATLDTLALYLACGIDPEKSTIFVQSHVPEHAQLGWALNCYTYFGELSRMTQFKDKSARYAENINAGLFGYPVLMAADILLYQTNLVPVGEDQKQHLELSRDIAQRFNALYGEIFKVPEPFIPKSGARVMSLLEPTKKMSKSDDNRNNVIGLLEDPKSVVKKIKRAVTDSDEPPVVRYDVQNKAGVSNLLDILSAVTGQSIPELEKQFEGKMYGHLKGEVADAVSGMLTELQERYHRFRNDEAFLQQVMKDGAEKASVHASRTLKAVYEAIGFVAKP.

ATP is bound by residues 11–13 (QPS) and 19–20 (GN). Positions 12–20 (PSGELTIGN) match the 'HIGH' region motif. Asp135 contacts L-tryptophan. ATP contacts are provided by residues 147–149 (GED), Val186, and 195–199 (KMSKS). Positions 195 to 199 (KMSKS) match the 'KMSKS' region motif.

The protein belongs to the class-I aminoacyl-tRNA synthetase family. As to quaternary structure, homodimer.

The protein resides in the cytoplasm. It catalyses the reaction tRNA(Trp) + L-tryptophan + ATP = L-tryptophyl-tRNA(Trp) + AMP + diphosphate + H(+). Catalyzes the attachment of tryptophan to tRNA(Trp). In Shigella flexneri, this protein is Tryptophan--tRNA ligase.